A 101-amino-acid chain; its full sequence is Small ubiquitin-related modifier 1 (101 aa).

Residues 20-97 (EYIKLKVIGQ…IEVYQEQTGG (78 aa)) form the Ubiquitin-like domain. A Glycyl lysine isopeptide (Gly-Lys) (interchain with K-? in acceptor proteins) cross-link involves residue Gly97. Positions 98–101 (HSTV) are excised as a propeptide.

Belongs to the ubiquitin family. SUMO subfamily. Interacts with SAE2, UBE2I, RANBP2, PIAS1 and PIAS2. Covalently attached to a number of proteins. Cleavage of precursor form by a sentrin-specific protease is necessary for function.

It is found in the nucleus membrane. The protein localises to the nucleus speckle. Its subcellular location is the cytoplasm. The protein resides in the nucleus. It localises to the PML body. It is found in the cell membrane. In terms of biological role, ubiquitin-like protein that can be covalently attached to proteins as a monomer or a lysine-linked polymer. Covalent attachment via an isopeptide bond to its substrates requires prior activation by the E1 complex SAE1-SAE2 and linkage to the E2 enzyme UBE2I. This post-translational modification on lysine residues of proteins plays a crucial role in a number of cellular processes such as nuclear transport, DNA replication and repair, mitosis and signal transduction. Polymeric SUMO1 chains are also susceptible to polyubiquitination which functions as a signal for proteasomal degradation of modified proteins. The polypeptide is Small ubiquitin-related modifier 1 (SUMO1) (Gallus gallus (Chicken)).